The primary structure comprises 261 residues: tRNA pseudouridine synthase A (261 aa).

Aspartate 51 serves as the catalytic Nucleophile. A substrate-binding site is contributed by tyrosine 109.

This sequence belongs to the tRNA pseudouridine synthase TruA family. As to quaternary structure, homodimer.

The enzyme catalyses uridine(38/39/40) in tRNA = pseudouridine(38/39/40) in tRNA. Functionally, formation of pseudouridine at positions 38, 39 and 40 in the anticodon stem and loop of transfer RNAs. This Shewanella pealeana (strain ATCC 700345 / ANG-SQ1) protein is tRNA pseudouridine synthase A.